Reading from the N-terminus, the 517-residue chain is Cobyric acid synthase (517 aa).

The GATase cobBQ-type domain maps to 253–453 (EVEIAVIKLP…IHGILDNDSL (201 aa)). The active-site Nucleophile is the C334. Residue H445 is part of the active site.

Belongs to the CobB/CobQ family. CobQ subfamily.

It functions in the pathway cofactor biosynthesis; adenosylcobalamin biosynthesis. In terms of biological role, catalyzes amidations at positions B, D, E, and G on adenosylcobyrinic A,C-diamide. NH(2) groups are provided by glutamine, and one molecule of ATP is hydrogenolyzed for each amidation. The protein is Cobyric acid synthase of Moorella thermoacetica (strain ATCC 39073 / JCM 9320).